A 994-amino-acid chain; its full sequence is Regulator of telomere elongation helicase 1 homolog (994 aa).

A Helicase ATP-binding domain is found at 15 to 300 (PKLSVKFPFE…EETARSEADA (286 aa)). 50–57 (SPTGTGKT) lines the ATP pocket. [4Fe-4S] cluster is bound by residues cysteine 142, cysteine 160, cysteine 169, and cysteine 208. The DEAH box motif lies at 251–254 (DEAH). The tract at residues 876 to 895 (FKIETPGPSTSTLTQKSEPP) is disordered. Over residues 882 to 892 (GPSTSTLTQKS) the composition is skewed to polar residues.

This sequence belongs to the helicase family. RAD3/XPD subfamily.

The protein resides in the nucleus. It carries out the reaction ATP + H2O = ADP + phosphate + H(+). A probable ATP-dependent DNA helicase implicated in DNA repair and the maintenance of genomic stability. Acts as an anti-recombinase to counteract toxic recombination and limit crossover during meiosis. Regulates meiotic recombination and crossover homeostasis by physically dissociating strand invasion events and thereby promotes noncrossover repair by meiotic synthesis dependent strand annealing (SDSA) as well as disassembly of D loop recombination intermediates. The chain is Regulator of telomere elongation helicase 1 homolog from Caenorhabditis elegans.